A 590-amino-acid polypeptide reads, in one-letter code: Leukocyte immunoglobulin-like receptor subfamily B member 5 (590 aa).

Residues 1–23 (MTLTLSVLICLGLSVGPRTCVQA) form the signal peptide. The Extracellular portion of the chain corresponds to 24-458 (GTLPKPTLWA…PQSGLGRHLG (435 aa)). 4 Ig-like C2-type domains span residues 27-116 (PKPT…LELV), 111-228 (DPLE…SLLI), 224-313 (PSLL…DPLD), and 337-418 (GENV…LVVS). Cysteines 49 and 98 form a disulfide. An N-linked (GlcNAc...) asparagine glycan is attached at asparagine 139. 2 disulfides stabilise this stretch: cysteine 144-cysteine 195 and cysteine 244-cysteine 295. N-linked (GlcNAc...) asparagine glycans are attached at residues asparagine 279 and asparagine 339. Cysteine 344 and cysteine 395 are oxidised to a cystine. Low complexity predominate over residues 416-433 (VVSGPSGDPSLSPTGSTP). The disordered stretch occupies residues 416–449 (VVSGPSGDPSLSPTGSTPTPGPEDQPLTPTGLDP). A helical transmembrane segment spans residues 459–479 (VVTGVSVAFVLLLFLLLFLLL). Topologically, residues 480 to 590 (RHRHQSKHRT…PSIYAPLAIH (111 aa)) are cytoplasmic. Disordered regions lie at residues 488 to 514 (RTSAHFYRPAGAAGPEPKDQGLQKRAS) and 529 to 550 (KDTQPKDGVEMDAPAAASEAPQ). Position 514 is a phosphoserine (serine 514). Residues 552–557 (VTYAQL) carry the ITIM motif 1 motif. Basic and acidic residues predominate over residues 562–578 (LRREATEPPPSQEREPP). The disordered stretch occupies residues 562 to 590 (LRREATEPPPSQEREPPAEPSIYAPLAIH). An ITIM motif 2 motif is present at residues 582-587 (SIYAPL).

As to expression, detected in a natural killer (NK) cells.

The protein localises to the membrane. Functionally, may act as receptor for class I MHC antigens. This chain is Leukocyte immunoglobulin-like receptor subfamily B member 5 (LILRB5), found in Homo sapiens (Human).